The sequence spans 690 residues: eEF1A lysine and N-terminal methyltransferase (690 aa).

Positions 427–451 are disordered; it reads AAASSASKKKNKKKAKQPASTGAKD. Basic residues predominate over residues 433–442; the sequence is SKKKNKKKAK.

The protein belongs to the methyltransferase superfamily.

It catalyses the reaction L-lysyl-[protein] + S-adenosyl-L-methionine = N(6)-methyl-L-lysyl-[protein] + S-adenosyl-L-homocysteine + H(+). The catalysed reaction is N(6)-methyl-L-lysyl-[protein] + S-adenosyl-L-methionine = N(6),N(6)-dimethyl-L-lysyl-[protein] + S-adenosyl-L-homocysteine + H(+). It carries out the reaction N-terminal glycyl-L-lysyl-L-glutamyl-[protein] + 3 S-adenosyl-L-methionine = N-terminal N,N,N-trimethyl-glycyl-L-lysyl-L-glutamyl-[protein] + 3 S-adenosyl-L-homocysteine + 3 H(+). In terms of biological role, dual methyltransferase that catalyzes methylation of elongation factor 1-alpha (eef1a1 and eef1a2) at two different positions, and is therefore involved in the regulation of mRNA translation. Via its C-terminus, methylates the N-terminus of eef1a1 and eef1a2. Via its N-terminus dimethylates lysine residues of eef1a1 and eef1a2. This chain is eEF1A lysine and N-terminal methyltransferase (mettl13), found in Danio rerio (Zebrafish).